The sequence spans 472 residues: Chromosomal replication initiator protein DnaA (472 aa).

Residues 1–73 (MSNMEQDRWS…LSCWQAELPE (73 aa)) are domain I, interacts with DnaA modulators. Residues 73–128 (EVNRVDLTVRSPVRCATPAKEVPAPVESRRDEQRPSAERSNGATPVSANHDALGGS) form a domain II region. Positions 90–124 (PAKEVPAPVESRRDEQRPSAERSNGATPVSANHDA) are disordered. The segment covering 99 to 109 (ESRRDEQRPSA) has biased composition (basic and acidic residues). Residues 110 to 119 (ERSNGATPVS) show a composition bias toward polar residues. Residues 129–351 (PLDPRLTFAS…GAINRLLAHS (223 aa)) are domain III, AAA+ region. G176, G178, K179, and T180 together coordinate ATP. Positions 352–472 (KLNNQPVTLE…VESLKRQLQE (121 aa)) are domain IV, binds dsDNA.

It belongs to the DnaA family. As to quaternary structure, oligomerizes as a right-handed, spiral filament on DNA at oriC.

The protein localises to the cytoplasm. Plays an essential role in the initiation and regulation of chromosomal replication. ATP-DnaA binds to the origin of replication (oriC) to initiate formation of the DNA replication initiation complex once per cell cycle. Binds the DnaA box (a 9 base pair repeat at the origin) and separates the double-stranded (ds)DNA. Forms a right-handed helical filament on oriC DNA; dsDNA binds to the exterior of the filament while single-stranded (ss)DNA is stabiized in the filament's interior. The ATP-DnaA-oriC complex binds and stabilizes one strand of the AT-rich DNA unwinding element (DUE), permitting loading of DNA polymerase. After initiation quickly degrades to an ADP-DnaA complex that is not apt for DNA replication. Binds acidic phospholipids. In Rhodopseudomonas palustris (strain ATCC BAA-98 / CGA009), this protein is Chromosomal replication initiator protein DnaA.